The sequence spans 356 residues: tRNA N6-adenosine threonylcarbamoyltransferase (356 aa).

Fe cation contacts are provided by His111 and His115. Substrate is bound by residues 143–147 (LASGG), Asp178, Gly191, Asp195, and Asn286. Residue Asp314 participates in Fe cation binding.

It belongs to the KAE1 / TsaD family. It depends on Fe(2+) as a cofactor.

It localises to the cytoplasm. The catalysed reaction is L-threonylcarbamoyladenylate + adenosine(37) in tRNA = N(6)-L-threonylcarbamoyladenosine(37) in tRNA + AMP + H(+). Functionally, required for the formation of a threonylcarbamoyl group on adenosine at position 37 (t(6)A37) in tRNAs that read codons beginning with adenine. Is involved in the transfer of the threonylcarbamoyl moiety of threonylcarbamoyl-AMP (TC-AMP) to the N6 group of A37, together with TsaE and TsaB. TsaD likely plays a direct catalytic role in this reaction. This chain is tRNA N6-adenosine threonylcarbamoyltransferase, found in Sorangium cellulosum (strain So ce56) (Polyangium cellulosum (strain So ce56)).